The primary structure comprises 439 residues: tRNA modification GTPase MnmE (439 aa).

3 residues coordinate (6S)-5-formyl-5,6,7,8-tetrahydrofolate: Arg-20, Glu-78, and Lys-116. Residues 211–364 (GIYVAILGEP…LLSAIQKKVE (154 aa)) enclose the TrmE-type G domain. Residues 221-226 (NSGKST), 240-246 (SEYAGTT), and 265-268 (DTAG) contribute to the GTP site. Mg(2+) contacts are provided by Ser-225 and Thr-246. Lys-439 is a (6S)-5-formyl-5,6,7,8-tetrahydrofolate binding site.

The protein belongs to the TRAFAC class TrmE-Era-EngA-EngB-Septin-like GTPase superfamily. TrmE GTPase family. As to quaternary structure, homodimer. Heterotetramer of two MnmE and two MnmG subunits. K(+) is required as a cofactor.

Its subcellular location is the cytoplasm. Exhibits a very high intrinsic GTPase hydrolysis rate. Involved in the addition of a carboxymethylaminomethyl (cmnm) group at the wobble position (U34) of certain tRNAs, forming tRNA-cmnm(5)s(2)U34. The chain is tRNA modification GTPase MnmE from Ehrlichia ruminantium (strain Gardel).